The sequence spans 197 residues: Ribonuclease HII (197 aa).

The region spanning 7–197 is the RNase H type-2 domain; the sequence is LGIAGVDEVG…SFLRKLFATV (191 aa). Residues aspartate 13, glutamate 14, and aspartate 109 each contribute to the a divalent metal cation site.

Belongs to the RNase HII family. Mn(2+) serves as cofactor. Requires Mg(2+) as cofactor.

Its subcellular location is the cytoplasm. It carries out the reaction Endonucleolytic cleavage to 5'-phosphomonoester.. Its function is as follows. Endonuclease that specifically degrades the RNA of RNA-DNA hybrids. The chain is Ribonuclease HII from Synechococcus sp. (strain CC9311).